The following is a 329-amino-acid chain: N-acetyl-gamma-glutamyl-phosphate reductase (329 aa).

Cys155 is a catalytic residue.

This sequence belongs to the NAGSA dehydrogenase family. Type 1 subfamily.

Its subcellular location is the cytoplasm. It carries out the reaction N-acetyl-L-glutamate 5-semialdehyde + phosphate + NADP(+) = N-acetyl-L-glutamyl 5-phosphate + NADPH + H(+). It participates in amino-acid biosynthesis; L-arginine biosynthesis; N(2)-acetyl-L-ornithine from L-glutamate: step 3/4. Functionally, catalyzes the NADPH-dependent reduction of N-acetyl-5-glutamyl phosphate to yield N-acetyl-L-glutamate 5-semialdehyde. In Shewanella piezotolerans (strain WP3 / JCM 13877), this protein is N-acetyl-gamma-glutamyl-phosphate reductase.